A 275-amino-acid polypeptide reads, in one-letter code: Large ribosomal subunit protein uL2 (275 aa).

Disordered regions lie at residues 34–59 (LEKK…GGHK) and 223–275 (VAMN…RNKK).

This sequence belongs to the universal ribosomal protein uL2 family. Part of the 50S ribosomal subunit. Forms a bridge to the 30S subunit in the 70S ribosome.

In terms of biological role, one of the primary rRNA binding proteins. Required for association of the 30S and 50S subunits to form the 70S ribosome, for tRNA binding and peptide bond formation. It has been suggested to have peptidyltransferase activity; this is somewhat controversial. Makes several contacts with the 16S rRNA in the 70S ribosome. The protein is Large ribosomal subunit protein uL2 of Teredinibacter turnerae (strain ATCC 39867 / T7901).